Here is a 308-residue protein sequence, read N- to C-terminus: Protoheme IX farnesyltransferase (308 aa).

8 helical membrane-spanning segments follow: residues 20-40, 50-70, 102-122, 124-144, 149-169, 170-190, 227-249, and 288-308; these read LLAYLALTKPRVIELLLVTAI, AIHPLLMLNTLVGGMMAAAGA, NALALGLTLTVISFFWLWCAT, LLAGVLALVTVAFYVFVYTLW, TSQNVVWGGAAGCMPVMIGWS, AITGTIAWPALAMFAIIFFWT, LIYTWLTVAATLVLALATSWLYG, and YLAVVFCALAVDSVIALPTLH.

It belongs to the UbiA prenyltransferase family. Protoheme IX farnesyltransferase subfamily.

It is found in the cell membrane. It carries out the reaction heme b + (2E,6E)-farnesyl diphosphate + H2O = Fe(II)-heme o + diphosphate. It functions in the pathway porphyrin-containing compound metabolism; heme O biosynthesis; heme O from protoheme: step 1/1. Functionally, converts heme B (protoheme IX) to heme O by substitution of the vinyl group on carbon 2 of heme B porphyrin ring with a hydroxyethyl farnesyl side group. This chain is Protoheme IX farnesyltransferase, found in Mycobacterium tuberculosis (strain ATCC 25618 / H37Rv).